The chain runs to 282 residues: Biotin synthase (282 aa).

Positions 1-228 (MQEIFLCSIS…NARLMVAGGR (228 aa)) constitute a Radical SAM core domain. [4Fe-4S] cluster-binding residues include C17, C21, and C24. Residues C61, C96, C154, and R221 each contribute to the [2Fe-2S] cluster site.

This sequence belongs to the radical SAM superfamily. Biotin synthase family. As to quaternary structure, homodimer. It depends on [4Fe-4S] cluster as a cofactor. [2Fe-2S] cluster is required as a cofactor.

It carries out the reaction (4R,5S)-dethiobiotin + (sulfur carrier)-SH + 2 reduced [2Fe-2S]-[ferredoxin] + 2 S-adenosyl-L-methionine = (sulfur carrier)-H + biotin + 2 5'-deoxyadenosine + 2 L-methionine + 2 oxidized [2Fe-2S]-[ferredoxin]. It participates in cofactor biosynthesis; biotin biosynthesis; biotin from 7,8-diaminononanoate: step 2/2. In terms of biological role, catalyzes the conversion of dethiobiotin (DTB) to biotin by the insertion of a sulfur atom into dethiobiotin via a radical-based mechanism. The sequence is that of Biotin synthase from Helicobacter pylori (strain ATCC 700392 / 26695) (Campylobacter pylori).